Here is a 307-residue protein sequence, read N- to C-terminus: tRNA pseudouridine synthase B (307 aa).

Asp-41 functions as the Nucleophile in the catalytic mechanism.

The protein belongs to the pseudouridine synthase TruB family. Type 1 subfamily.

The enzyme catalyses uridine(55) in tRNA = pseudouridine(55) in tRNA. Its function is as follows. Responsible for synthesis of pseudouridine from uracil-55 in the psi GC loop of transfer RNAs. This chain is tRNA pseudouridine synthase B, found in Prochlorococcus marinus (strain AS9601).